The following is a 164-amino-acid chain: Large ribosomal subunit protein bL19 (164 aa).

Residues 144–164 (EAEKQTEVQAEPKIEKSEEKK) are disordered.

It belongs to the bacterial ribosomal protein bL19 family.

In terms of biological role, this protein is located at the 30S-50S ribosomal subunit interface and may play a role in the structure and function of the aminoacyl-tRNA binding site. The chain is Large ribosomal subunit protein bL19 from Pelagibacter ubique (strain HTCC1062).